Here is a 434-residue protein sequence, read N- to C-terminus: Glutamate-1-semialdehyde 2,1-aminomutase (434 aa).

Position 273 is an N6-(pyridoxal phosphate)lysine (K273).

The protein belongs to the class-III pyridoxal-phosphate-dependent aminotransferase family. HemL subfamily. As to quaternary structure, homodimer. It depends on pyridoxal 5'-phosphate as a cofactor.

The protein localises to the cytoplasm. It carries out the reaction (S)-4-amino-5-oxopentanoate = 5-aminolevulinate. The protein operates within porphyrin-containing compound metabolism; protoporphyrin-IX biosynthesis; 5-aminolevulinate from L-glutamyl-tRNA(Glu): step 2/2. In Polynucleobacter asymbioticus (strain DSM 18221 / CIP 109841 / QLW-P1DMWA-1) (Polynucleobacter necessarius subsp. asymbioticus), this protein is Glutamate-1-semialdehyde 2,1-aminomutase.